Reading from the N-terminus, the 124-residue chain is Phycocyanin PC645 alpha-3 subunit (124 aa).

(2R,3E)-phycocyanobilin is bound at residue Arg71. Mesobiliverdin-binding residues include Cys73, Tyr81, and Lys97.

Belongs to the phycoerythrin family. Heterotetramer of 2 different alpha chains and 2 identical beta chains which form 2 alpha-beta heterodimers within the heterotetramer. In terms of processing, contains one phycocyanobilin chromophore and one mesobiliverdin chromophore with binding mediated by both the alpha and beta subunits.

Its subcellular location is the plastid. It localises to the chloroplast thylakoid membrane. Its function is as follows. Light-harvesting photosynthetic tetrapyrrole chromophore-protein from the phycobiliprotein complex. In Chroomonas sp. (strain CCMP270), this protein is Phycocyanin PC645 alpha-3 subunit.